We begin with the raw amino-acid sequence, 258 residues long: Acetylglutamate kinase (258 aa).

Substrate-binding positions include 41-42 (GG), Arg63, and Asn156.

This sequence belongs to the acetylglutamate kinase family. ArgB subfamily.

It localises to the cytoplasm. It catalyses the reaction N-acetyl-L-glutamate + ATP = N-acetyl-L-glutamyl 5-phosphate + ADP. Its pathway is amino-acid biosynthesis; L-arginine biosynthesis; N(2)-acetyl-L-ornithine from L-glutamate: step 2/4. Catalyzes the ATP-dependent phosphorylation of N-acetyl-L-glutamate. The sequence is that of Acetylglutamate kinase from Bacillus velezensis (strain DSM 23117 / BGSC 10A6 / LMG 26770 / FZB42) (Bacillus amyloliquefaciens subsp. plantarum).